The sequence spans 481 residues: ATP synthase subunit alpha (481 aa).

Position 145–152 (145–152 (GDRQTGKT)) interacts with ATP.

Belongs to the ATPase alpha/beta chains family. In terms of assembly, F-type ATPases have 2 components, CF(1) - the catalytic core - and CF(0) - the membrane proton channel. CF(1) has five subunits: alpha(3), beta(3), gamma(1), delta(1), epsilon(1). CF(0) has three main subunits: a(1), b(2) and c(9-12). The alpha and beta chains form an alternating ring which encloses part of the gamma chain. CF(1) is attached to CF(0) by a central stalk formed by the gamma and epsilon chains, while a peripheral stalk is formed by the delta and b chains.

Its subcellular location is the cell membrane. The enzyme catalyses ATP + H2O + 4 H(+)(in) = ADP + phosphate + 5 H(+)(out). Its function is as follows. Produces ATP from ADP in the presence of a proton gradient across the membrane. The alpha chain is a regulatory subunit. This Carsonella ruddii (strain PV) protein is ATP synthase subunit alpha.